Here is a 277-residue protein sequence, read N- to C-terminus: Probable endonuclease 4 (277 aa).

Zn(2+)-binding residues include histidine 67, histidine 107, glutamate 141, aspartate 173, histidine 176, histidine 207, aspartate 220, histidine 222, and glutamate 252.

It belongs to the AP endonuclease 2 family. Zn(2+) serves as cofactor.

The enzyme catalyses Endonucleolytic cleavage to 5'-phosphooligonucleotide end-products.. Functionally, endonuclease IV plays a role in DNA repair. It cleaves phosphodiester bonds at apurinic or apyrimidinic (AP) sites, generating a 3'-hydroxyl group and a 5'-terminal sugar phosphate. The sequence is that of Probable endonuclease 4 from Finegoldia magna (strain ATCC 29328 / DSM 20472 / WAL 2508) (Peptostreptococcus magnus).